Consider the following 217-residue polypeptide: 3,4-dihydroxy-2-butanone 4-phosphate synthase (217 aa).

D-ribulose 5-phosphate-binding positions include 37–38, D42, 150–154, and E174; these read RE and RRGHT. Mg(2+) is bound at residue E38. A Mg(2+)-binding site is contributed by H153.

It belongs to the DHBP synthase family. In terms of assembly, homodimer. Mg(2+) is required as a cofactor. Requires Mn(2+) as cofactor.

The enzyme catalyses D-ribulose 5-phosphate = (2S)-2-hydroxy-3-oxobutyl phosphate + formate + H(+). It functions in the pathway cofactor biosynthesis; riboflavin biosynthesis; 2-hydroxy-3-oxobutyl phosphate from D-ribulose 5-phosphate: step 1/1. In terms of biological role, catalyzes the conversion of D-ribulose 5-phosphate to formate and 3,4-dihydroxy-2-butanone 4-phosphate. The sequence is that of 3,4-dihydroxy-2-butanone 4-phosphate synthase from Desulforapulum autotrophicum (strain ATCC 43914 / DSM 3382 / VKM B-1955 / HRM2) (Desulfobacterium autotrophicum).